The sequence spans 218 residues: Protein-methionine-sulfoxide reductase heme-binding subunit MsrQ (218 aa).

5 helical membrane passes run 14–34, 60–80, 86–106, 121–141, and 155–175; these read LVHAAALAPIALLGWQFWQVW, LLLITLAITPLRQLTGQAVVI, LGLYAFFYATVHLAAYLTLDL, PYITVGFAAWLLLMPLAITST, and LHMLIYPIGLLAVLHFWWLVK.

Belongs to the MsrQ family. As to quaternary structure, heterodimer of a catalytic subunit (MsrP) and a heme-binding subunit (MsrQ). FMN is required as a cofactor. Requires heme b as cofactor.

The protein localises to the cell inner membrane. In terms of biological role, part of the MsrPQ system that repairs oxidized periplasmic proteins containing methionine sulfoxide residues (Met-O), using respiratory chain electrons. Thus protects these proteins from oxidative-stress damage caused by reactive species of oxygen and chlorine generated by the host defense mechanisms. MsrPQ is essential for the maintenance of envelope integrity under bleach stress, rescuing a wide series of structurally unrelated periplasmic proteins from methionine oxidation. MsrQ provides electrons for reduction to the reductase catalytic subunit MsrP, using the quinone pool of the respiratory chain. In Xanthomonas axonopodis pv. citri (strain 306), this protein is Protein-methionine-sulfoxide reductase heme-binding subunit MsrQ.